Reading from the N-terminus, the 154-residue chain is AP-1 complex subunit sigma-2 (154 aa).

The protein belongs to the adaptor complexes small subunit family. As to quaternary structure, adaptor protein complex 1 (AP-1) is a heterotetramer composed of two large adaptins (gamma-type subunit and beta-type subunit), a medium adaptin (mu-type subunit) and a small adaptin (sigma-type subunit).

Its subcellular location is the golgi apparatus. The protein resides in the trans-Golgi network. It is found in the cytoplasmic vesicle. It localises to the clathrin-coated vesicle membrane. Subunit of clathrin-associated adaptor protein complex 1 that plays a role in protein sorting in the trans-Golgi network (TGN) and endosomes. The AP complexes mediate the recruitment of clathrin to membranes and the recognition of sorting signals within the cytosolic tails of transmembrane cargo molecules. Also involved in early steps of phagocytosis and macropinocytosis. In Dictyostelium discoideum (Social amoeba), this protein is AP-1 complex subunit sigma-2 (ap1s2).